We begin with the raw amino-acid sequence, 347 residues long: Aspartate carbamoyltransferase catalytic subunit (347 aa).

Residues Arg-75 and Thr-76 each coordinate carbamoyl phosphate. Residue Lys-103 participates in L-aspartate binding. Carbamoyl phosphate contacts are provided by Arg-125, His-153, and Gln-156. Residues Arg-193 and Arg-247 each coordinate L-aspartate. Residues Gly-288 and Pro-289 each coordinate carbamoyl phosphate.

The protein belongs to the aspartate/ornithine carbamoyltransferase superfamily. ATCase family. In terms of assembly, heterododecamer (2C3:3R2) of six catalytic PyrB chains organized as two trimers (C3), and six regulatory PyrI chains organized as three dimers (R2).

The catalysed reaction is carbamoyl phosphate + L-aspartate = N-carbamoyl-L-aspartate + phosphate + H(+). It functions in the pathway pyrimidine metabolism; UMP biosynthesis via de novo pathway; (S)-dihydroorotate from bicarbonate: step 2/3. In terms of biological role, catalyzes the condensation of carbamoyl phosphate and aspartate to form carbamoyl aspartate and inorganic phosphate, the committed step in the de novo pyrimidine nucleotide biosynthesis pathway. The chain is Aspartate carbamoyltransferase catalytic subunit from Erythrobacter litoralis (strain HTCC2594).